Reading from the N-terminus, the 585-residue chain is ADP-ribosylation factor-binding protein GGA2 (585 aa).

The VHS domain occupies 33–169 (ACRMSLAEPD…LLKYKGYAFP (137 aa)). Residues K180 and K287 each participate in a glycyl lysine isopeptide (Lys-Gly) (interchain with G-Cter in ubiquitin) cross-link. Residues 196–321 (EIAQAAKLEE…LLEKFNLLKN (126 aa)) enclose the GAT domain. The segment at 358 to 378 (LDEAPSQGNNNTNGTGTPAAA) is disordered. The span at 365 to 374 (GNNNTNGTGT) shows a compositional bias: low complexity. The region spanning 466–581 (TTTAPARTLV…TQAEETAVFT (116 aa)) is the GAE domain.

As to quaternary structure, binds to ARF1 and ARF2.

The protein resides in the golgi apparatus. It localises to the trans-Golgi network. In terms of biological role, may play a role in the regulation of membrane traffic through the trans-Golgi network. The chain is ADP-ribosylation factor-binding protein GGA2 (GGA2) from Saccharomyces cerevisiae (strain ATCC 204508 / S288c) (Baker's yeast).